We begin with the raw amino-acid sequence, 154 residues long: Protein X (154 aa).

Positions 68-117 (PCALRFTSARRMETTVNAHRNLPKVLHKRTLGLSAMSTTDLEAHFKDCVF) are mitochondrial targeting sequence.

It belongs to the orthohepadnavirus protein X family. In terms of assembly, may form homodimer. May interact with host CEBPA, CFLAR, CREB1, DDB1, E4F1, HBXIP, HSPD1/HSP60, NFKBIA, POLR2E and SMAD4. Interacts with host SMC5-SMC6 complex and induces its degradation. Interacts with host TRPC4AP; leading to prevent ubiquitination of TRPC4AP. Interacts with host PLSCR1; this interaction promotes ubiquitination and degradation of HBx and impairs HBx-mediated cell proliferation. In terms of processing, a fraction may be phosphorylated in insect cells and HepG2 cells, a human hepatoblastoma cell line. Phosphorylated in vitro by host protein kinase C or mitogen-activated protein kinase. N-acetylated in insect cells.

Its subcellular location is the host cytoplasm. The protein localises to the host nucleus. It localises to the host mitochondrion. Its function is as follows. Multifunctional protein that plays a role in silencing host antiviral defenses and promoting viral transcription. Does not seem to be essential for HBV infection. May be directly involved in development of cirrhosis and liver cancer (hepatocellular carcinoma). Most of cytosolic activities involve modulation of cytosolic calcium. The effect on apoptosis is controversial depending on the cell types in which the studies have been conducted. May induce apoptosis by localizing in mitochondria and causing loss of mitochondrial membrane potential. May also modulate apoptosis by binding host CFLAR, a key regulator of the death-inducing signaling complex (DISC). Promotes viral transcription by using the host E3 ubiquitin ligase DDB1 to target the SMC5-SMC6 complex to proteasomal degradation. This host complex would otherwise bind to viral episomal DNA, and prevents its transcription. Moderately stimulates transcription of many different viral and cellular transcription elements. Promoters and enhancers stimulated by HBx contain DNA binding sites for NF-kappa-B, AP-1, AP-2, c-EBP, ATF/CREB, or the calcium-activated factor NF-AT. This is Protein X from Hepatitis B virus genotype B2 (isolate Indonesia/pIDW420/1988) (HBV-B).